The primary structure comprises 184 residues: Adenylate kinase 1 (184 aa).

11-16 is a binding site for ATP; the sequence is GAGKGT. Positions 31–60 are NMP; sequence STGDILRQAMKEQTPLGIKAQSYVDSGELV. AMP is bound by residues Thr32, Arg37, 58–60, 86–89, and Gln93; these read ELV and GFPR. Positions 127-133 are LID; that stretch reads SRGRKDD. Arg128 is an ATP binding site. AMP contacts are provided by Arg130 and Arg141. Gln169 contacts ATP.

This sequence belongs to the adenylate kinase family. As to quaternary structure, monomer.

It is found in the cytoplasm. It catalyses the reaction AMP + ATP = 2 ADP. Its pathway is purine metabolism; AMP biosynthesis via salvage pathway; AMP from ADP: step 1/1. Its function is as follows. Catalyzes the reversible transfer of the terminal phosphate group between ATP and AMP. Plays an important role in cellular energy homeostasis and in adenine nucleotide metabolism. The chain is Adenylate kinase 1 from Nostoc sp. (strain PCC 7120 / SAG 25.82 / UTEX 2576).